A 937-amino-acid chain; its full sequence is Bifunctional glutamine synthetase adenylyltransferase/adenylyl-removing enzyme (937 aa).

Residues 1 to 436 (MSQPIPSASP…AAEFAELLAP (436 aa)) are adenylyl removase. The tract at residues 443-937 (PDTLADYWRA…QLRFQPGKGA (495 aa)) is adenylyl transferase.

It belongs to the GlnE family. Mg(2+) serves as cofactor.

It carries out the reaction [glutamine synthetase]-O(4)-(5'-adenylyl)-L-tyrosine + phosphate = [glutamine synthetase]-L-tyrosine + ADP. The catalysed reaction is [glutamine synthetase]-L-tyrosine + ATP = [glutamine synthetase]-O(4)-(5'-adenylyl)-L-tyrosine + diphosphate. Its function is as follows. Involved in the regulation of glutamine synthetase GlnA, a key enzyme in the process to assimilate ammonia. When cellular nitrogen levels are high, the C-terminal adenylyl transferase (AT) inactivates GlnA by covalent transfer of an adenylyl group from ATP to specific tyrosine residue of GlnA, thus reducing its activity. Conversely, when nitrogen levels are low, the N-terminal adenylyl removase (AR) activates GlnA by removing the adenylyl group by phosphorolysis, increasing its activity. The regulatory region of GlnE binds the signal transduction protein PII (GlnB) which indicates the nitrogen status of the cell. This is Bifunctional glutamine synthetase adenylyltransferase/adenylyl-removing enzyme from Xanthomonas campestris pv. campestris (strain ATCC 33913 / DSM 3586 / NCPPB 528 / LMG 568 / P 25).